The primary structure comprises 101 residues: NAD(P)H-quinone oxidoreductase subunit 4L, chloroplastic (101 aa).

The next 3 helical transmembrane spans lie at 2 to 22, 32 to 52, and 61 to 81; these read ILEHVLVLSAYLFLIGLYGLI, MCLELILNAVNMNFVTFSDFF, and IFCIFVIAIAAAEAAIGLAIV.

This sequence belongs to the complex I subunit 4L family. NDH is composed of at least 16 different subunits, 5 of which are encoded in the nucleus.

The protein resides in the plastid. Its subcellular location is the chloroplast thylakoid membrane. It catalyses the reaction a plastoquinone + NADH + (n+1) H(+)(in) = a plastoquinol + NAD(+) + n H(+)(out). The enzyme catalyses a plastoquinone + NADPH + (n+1) H(+)(in) = a plastoquinol + NADP(+) + n H(+)(out). In terms of biological role, NDH shuttles electrons from NAD(P)H:plastoquinone, via FMN and iron-sulfur (Fe-S) centers, to quinones in the photosynthetic chain and possibly in a chloroplast respiratory chain. The immediate electron acceptor for the enzyme in this species is believed to be plastoquinone. Couples the redox reaction to proton translocation, and thus conserves the redox energy in a proton gradient. The polypeptide is NAD(P)H-quinone oxidoreductase subunit 4L, chloroplastic (Lepidium virginicum (Virginia pepperweed)).